The sequence spans 424 residues: MANPTTGKSSIRAKLSNSSLSNLFKKNKNKRQREETEEQDNEDKDESKNQDENKDTQLTPRKRRRLTKEFEEKEARYTNELPKELRKYRPKGFRFNLPPTDRPIRIYADGVFDLFHLGHMKQLEQCKKAFPNVTLIVGVPSDKITHKLKGLTVLTDKQRCETLTHCRWVDEVVPNAPWCVTPEFLLEHKIDYVAHDDIPYVSADSDDIYKPIKEMGKFLTTQRTNGVSTSDIITKIIRDYDKYLMRNFARGATRQELNVSWLKKNELEFKKHINEFRSYFKKNQTNLNNASRDLYFEVREILLKKTLGKKLYSKLIGNELKKQNQRQRKQNFLDDPFTRKLIREASPATEFANEFTGENSTAKSPDDNGNLFSQEDDEDTNSNNTNTNSDSDSNTNSTPPSEDDDDNDRLTLENLTQKKKQSAN.

Residues 1-70 (MANPTTGKSS…RKRRRLTKEF (70 aa)) are disordered. Residues 14 to 24 (KLSNSSLSNLF) are compositionally biased toward low complexity. Position 16 is a phosphoserine (serine 16). Residues 35–44 (ETEEQDNEDK) are compositionally biased toward acidic residues. The span at 45–55 (DESKNQDENKD) shows a compositional bias: basic and acidic residues. A Phosphothreonine modification is found at threonine 59. CTP is bound by residues 111–119 (VFDLFHLGH) and lysine 149. Residues lysine 149 and tryptophan 178 each contribute to the substrate site. CTP-binding positions include 195–196 (HD), tyrosine 200, and 223–227 (RTNGV). At serine 346 the chain carries Phosphoserine. Residues 348-424 (ATEFANEFTG…LTQKKKQSAN (77 aa)) are disordered. Over residues 381-398 (NSNNTNTNSDSDSNTNST) the composition is skewed to low complexity. Residue serine 401 is modified to Phosphoserine; by CK2.

Belongs to the cytidylyltransferase family.

Its subcellular location is the membrane. It carries out the reaction phosphocholine + CTP + H(+) = CDP-choline + diphosphate. It functions in the pathway phospholipid metabolism; phosphatidylcholine biosynthesis; phosphatidylcholine from phosphocholine: step 1/2. Functionally, catalyzes the key rate-limiting step in the CDP-choline pathway for phosphatidylcholine biosynthesis. In Saccharomyces cerevisiae (strain ATCC 204508 / S288c) (Baker's yeast), this protein is Choline-phosphate cytidylyltransferase (PCT1).